A 496-amino-acid polypeptide reads, in one-letter code: Transmembrane protein 104 (496 aa).

Over M1–E10 the chain is Cytoplasmic. A helical transmembrane segment spans residues L11–L31. The Extracellular portion of the chain corresponds to T32–A36. Residues F37–F57 form a helical membrane-spanning segment. At V58–N146 the chain is on the cytoplasmic side. A helical transmembrane segment spans residues L147–V167. Residues P168–R204 lie on the Extracellular side of the membrane. A glycan (N-linked (GlcNAc...) asparagine) is linked at N193. The helical transmembrane segment at V205–F225 threads the bilayer. The Cytoplasmic segment spans residues D226–L233. Residues Q234 to I254 form a helical membrane-spanning segment. The Extracellular segment spans residues R255 to L276. Residues F277–V297 traverse the membrane as a helical segment. The Cytoplasmic portion of the chain corresponds to S298–L306. A helical transmembrane segment spans residues V307–F327. Residues C328–R354 lie on the Extracellular side of the membrane. A helical transmembrane segment spans residues F355 to T375. At L376–R397 the chain is on the cytoplasmic side. Residues V398–L418 form a helical membrane-spanning segment. The Extracellular portion of the chain corresponds to E419 to L421. The chain crosses the membrane as a helical span at residues V422 to V442. At Y443–W470 the chain is on the cytoplasmic side. A helical transmembrane segment spans residues V471–L491. The Extracellular portion of the chain corresponds to S492–L496.

The protein belongs to the TMEM104 family.

It localises to the membrane. The polypeptide is Transmembrane protein 104 (TMEM104) (Homo sapiens (Human)).